Here is a 248-residue protein sequence, read N- to C-terminus: 1-(5-phosphoribosyl)-5-[(5-phosphoribosylamino)methylideneamino] imidazole-4-carboxamide isomerase (248 aa).

The active-site Proton acceptor is D8. D129 functions as the Proton donor in the catalytic mechanism.

This sequence belongs to the HisA/HisF family.

It localises to the cytoplasm. The enzyme catalyses 1-(5-phospho-beta-D-ribosyl)-5-[(5-phospho-beta-D-ribosylamino)methylideneamino]imidazole-4-carboxamide = 5-[(5-phospho-1-deoxy-D-ribulos-1-ylimino)methylamino]-1-(5-phospho-beta-D-ribosyl)imidazole-4-carboxamide. It participates in amino-acid biosynthesis; L-histidine biosynthesis; L-histidine from 5-phospho-alpha-D-ribose 1-diphosphate: step 4/9. The protein is 1-(5-phosphoribosyl)-5-[(5-phosphoribosylamino)methylideneamino] imidazole-4-carboxamide isomerase of Desulfitobacterium hafniense (strain Y51).